The sequence spans 468 residues: PE family protein PE3 (468 aa).

The region spanning 1–92 is the PE domain; the sequence is MSYVIAAPEM…AGAAYAQAEA (92 aa). The PE-PPE domain maps to 154 to 375; the sequence is PVAQYTPEQW…DLRVLVDLGY (222 aa).

Belongs to the mycobacterial PE family.

It localises to the secreted. The protein localises to the cell wall. In terms of biological role, plays significant roles in mycobacterial persistence during infection and modulates host immune response. The polypeptide is PE family protein PE3 (Mycobacterium tuberculosis (strain ATCC 25618 / H37Rv)).